Here is a 584-residue protein sequence, read N- to C-terminus: Aspartate--tRNA(Asp/Asn) ligase (584 aa).

Glu174 is an L-aspartate binding site. Residues 198-201 are aspartate; the sequence is QLFK. Arg220 is a binding site for L-aspartate. ATP contacts are provided by residues 220–222 and Gln229; that span reads RDE. His447 contacts L-aspartate. Glu480 lines the ATP pocket. Position 487 (Arg487) interacts with L-aspartate. 532-535 is an ATP binding site; sequence GFDR.

Belongs to the class-II aminoacyl-tRNA synthetase family. Type 1 subfamily. Homodimer.

The protein resides in the cytoplasm. The enzyme catalyses tRNA(Asx) + L-aspartate + ATP = L-aspartyl-tRNA(Asx) + AMP + diphosphate. Aspartyl-tRNA synthetase with relaxed tRNA specificity since it is able to aspartylate not only its cognate tRNA(Asp) but also tRNA(Asn). Reaction proceeds in two steps: L-aspartate is first activated by ATP to form Asp-AMP and then transferred to the acceptor end of tRNA(Asp/Asn). This is Aspartate--tRNA(Asp/Asn) ligase from Endomicrobium trichonymphae.